Reading from the N-terminus, the 69-residue chain is Nodulin-3 (69 aa).

The first 24 residues, 1-24 (MAKILKFVFAIILFFSLFLLSMEA), serve as a signal peptide directing secretion.

The protein is Nodulin-3 (ENOD3) of Pisum sativum (Garden pea).